The sequence spans 141 residues: MRHYEIILLIHPDQSEQVPAMLERYKGMIAAGGGKVHRVEDWGRRQLAYLINKLSKAHYLCVNIEADQAVMAELEHAFKFNDAVLRHLTVHKKKAVTGPSAMMKTVEREEFRKASQAGNQTTAPAASPADHAAAPASADRS.

The tract at residues 96–141 (VTGPSAMMKTVEREEFRKASQAGNQTTAPAASPADHAAAPASADRS) is disordered. Residues 123-141 (APAASPADHAAAPASADRS) are compositionally biased toward low complexity.

This sequence belongs to the bacterial ribosomal protein bS6 family.

In terms of biological role, binds together with bS18 to 16S ribosomal RNA. The polypeptide is Small ribosomal subunit protein bS6 (Verminephrobacter eiseniae (strain EF01-2)).